The primary structure comprises 439 residues: Homogentisate 1,2-dioxygenase (439 aa).

H289 serves as the catalytic Proton acceptor. Fe cation is bound by residues H332 and E338. The homogentisate site is built by Y347 and H368. H368 contributes to the Fe cation binding site.

This sequence belongs to the homogentisate dioxygenase family. Hexamer; dimer of trimers. It depends on Fe cation as a cofactor.

It catalyses the reaction homogentisate + O2 = 4-maleylacetoacetate + H(+). Its pathway is amino-acid degradation; L-phenylalanine degradation; acetoacetate and fumarate from L-phenylalanine: step 4/6. Functionally, involved in the catabolism of homogentisate (2,5-dihydroxyphenylacetate or 2,5-OH-PhAc), a central intermediate in the degradation of phenylalanine and tyrosine. Catalyzes the oxidative ring cleavage of the aromatic ring of homogentisate to yield maleylacetoacetate. The chain is Homogentisate 1,2-dioxygenase from Xanthomonas euvesicatoria pv. vesicatoria (strain 85-10) (Xanthomonas campestris pv. vesicatoria).